Here is a 115-residue protein sequence, read N- to C-terminus: Large ribosomal subunit protein bL31B (115 aa).

This sequence belongs to the bacterial ribosomal protein bL31 family. Type B subfamily. As to quaternary structure, part of the 50S ribosomal subunit.

The sequence is that of Large ribosomal subunit protein bL31B from Polynucleobacter asymbioticus (strain DSM 18221 / CIP 109841 / QLW-P1DMWA-1) (Polynucleobacter necessarius subsp. asymbioticus).